A 79-amino-acid chain; its full sequence is Acyl carrier protein (79 aa).

One can recognise a Carrier domain in the interval 6-79; the sequence is KEILDGLAEI…VQDVINYIQK (74 aa). Ser41 is modified (O-(pantetheine 4'-phosphoryl)serine).

It belongs to the acyl carrier protein (ACP) family. Post-translationally, 4'-phosphopantetheine is transferred from CoA to a specific serine of apo-ACP by AcpS. This modification is essential for activity because fatty acids are bound in thioester linkage to the sulfhydryl of the prosthetic group.

The protein resides in the cytoplasm. It functions in the pathway lipid metabolism; fatty acid biosynthesis. Functionally, carrier of the growing fatty acid chain in fatty acid biosynthesis. The sequence is that of Acyl carrier protein from Thermobifida fusca (strain YX).